Here is a 262-residue protein sequence, read N- to C-terminus: Pyridoxine 5'-phosphate synthase (262 aa).

A 3-amino-2-oxopropyl phosphate-binding site is contributed by Asn-6. 8–9 (DH) contributes to the 1-deoxy-D-xylulose 5-phosphate binding site. Arg-17 is a 3-amino-2-oxopropyl phosphate binding site. His-43 (proton acceptor) is an active-site residue. Residues Arg-45 and His-50 each coordinate 1-deoxy-D-xylulose 5-phosphate. Catalysis depends on Glu-70, which acts as the Proton acceptor. Thr-102 is a 1-deoxy-D-xylulose 5-phosphate binding site. Residue His-215 is the Proton donor of the active site. Residues Gly-216 and 237–238 (GH) contribute to the 3-amino-2-oxopropyl phosphate site.

Belongs to the PNP synthase family. In terms of assembly, homooctamer; tetramer of dimers.

It is found in the cytoplasm. It catalyses the reaction 3-amino-2-oxopropyl phosphate + 1-deoxy-D-xylulose 5-phosphate = pyridoxine 5'-phosphate + phosphate + 2 H2O + H(+). It participates in cofactor biosynthesis; pyridoxine 5'-phosphate biosynthesis; pyridoxine 5'-phosphate from D-erythrose 4-phosphate: step 5/5. Catalyzes the complicated ring closure reaction between the two acyclic compounds 1-deoxy-D-xylulose-5-phosphate (DXP) and 3-amino-2-oxopropyl phosphate (1-amino-acetone-3-phosphate or AAP) to form pyridoxine 5'-phosphate (PNP) and inorganic phosphate. The sequence is that of Pyridoxine 5'-phosphate synthase from Helicobacter pylori (strain P12).